The sequence spans 83 residues: Kunitz-type serine protease inhibitor (83 aa).

The first 25 residues, Met1–Leu25, serve as a signal peptide directing secretion. The BPTI/Kunitz inhibitor domain occupies Cys31–Cys81. Disulfide bonds link Cys31–Cys81, Cys40–Cys64, and Cys56–Cys77.

As to expression, expressed by the venom gland.

It is found in the secreted. In terms of biological role, serine protease inhibitor that inhibits chymotrypsin (Ki=3520 nM). In Ophiophagus hannah (King cobra), this protein is Kunitz-type serine protease inhibitor.